We begin with the raw amino-acid sequence, 477 residues long: ETS translocation variant 1 (477 aa).

At Ser94 the chain carries Phosphoserine. The tract at residues 128–178 (PQVGMRPSNPPTPSSTPVSPLHHASPNSAHTSKPDRAFPAHLPPSQPIQDS) is disordered. Phosphoserine; by RPS6KA1 and RPS6KA5 is present on residues Ser191 and Ser216. Lys317 participates in a covalent cross-link: Glycyl lysine isopeptide (Lys-Gly) (interchain with G-Cter in SUMO2). Residues 335 to 415 (LQLWQFLVAL…AGERYVYKFV (81 aa)) constitute a DNA-binding region (ETS).

Belongs to the ETS family. In terms of processing, sumoylated. Post-translationally, phosphorylated at Ser-191 and Ser-216 by RPS6KA1 and RPS6KA5; phosphorylation activates transcriptional activity.

It is found in the nucleus. Its function is as follows. Transcriptional activator that binds to DNA sequences containing the consensus pentanucleotide 5'-CGGA[AT]-3'. Required for olfactory dopaminergic neuron differentiation; may directly activate expression of tyrosine hydroxylase (TH). This is ETS translocation variant 1 (ETV1) from Bos taurus (Bovine).